The primary structure comprises 410 residues: Translation initiation factor 2 subunit gamma (410 aa).

The tr-type G domain occupies 6–203; sequence QSEINIGMVG…AIEDLMPTPE (198 aa). Residues 15 to 22 are G1; the sequence is GHVDHGKT. Residues D18, T22, G43, and S45 each coordinate Mg(2+). A GTP-binding site is contributed by 18 to 23; that stretch reads DHGKTS. The tract at residues 43–47 is G2; sequence GISIR. Residues C58, C61, C73, and C76 each contribute to the Zn(2+) site. The segment at 90 to 93 is G3; that stretch reads DAPG. GTP-binding positions include 146–149 and 181–183; these read NKID and SAH. Residues 146 to 149 are G4; it reads NKID. Residues 181–183 are G5; that stretch reads SAH.

This sequence belongs to the TRAFAC class translation factor GTPase superfamily. Classic translation factor GTPase family. EIF2G subfamily. Heterotrimer composed of an alpha, a beta and a gamma chain. Mg(2+) serves as cofactor.

It carries out the reaction GTP + H2O = GDP + phosphate + H(+). Its function is as follows. eIF-2 functions in the early steps of protein synthesis by forming a ternary complex with GTP and initiator tRNA. The polypeptide is Translation initiation factor 2 subunit gamma (Methanococcus aeolicus (strain ATCC BAA-1280 / DSM 17508 / OCM 812 / Nankai-3)).